We begin with the raw amino-acid sequence, 436 residues long: 3-phosphoshikimate 1-carboxyvinyltransferase (436 aa).

The 3-phosphoshikimate site is built by K23, S24, and R28. K23 is a binding site for phosphoenolpyruvate. 2 residues coordinate phosphoenolpyruvate: G97 and R126. Positions 171, 173, 323, and 350 each coordinate 3-phosphoshikimate. Q173 contacts phosphoenolpyruvate. D323 serves as the catalytic Proton acceptor. Positions 354 and 396 each coordinate phosphoenolpyruvate.

The protein belongs to the EPSP synthase family. As to quaternary structure, monomer.

It localises to the cytoplasm. It catalyses the reaction 3-phosphoshikimate + phosphoenolpyruvate = 5-O-(1-carboxyvinyl)-3-phosphoshikimate + phosphate. Its pathway is metabolic intermediate biosynthesis; chorismate biosynthesis; chorismate from D-erythrose 4-phosphate and phosphoenolpyruvate: step 6/7. In terms of biological role, catalyzes the transfer of the enolpyruvyl moiety of phosphoenolpyruvate (PEP) to the 5-hydroxyl of shikimate-3-phosphate (S3P) to produce enolpyruvyl shikimate-3-phosphate and inorganic phosphate. The polypeptide is 3-phosphoshikimate 1-carboxyvinyltransferase (Prochlorococcus marinus (strain AS9601)).